The sequence spans 455 residues: F-box/LRR-repeat protein At5g35995 (455 aa).

The F-box domain occupies 4–51; the sequence is RDFISSLPDEVLGKKILSLLPTKLVVSTSVLSKRWRNLFHFVDSFDLE. LRR repeat units lie at residues 114–138, 152–176, 282–305, 308–324, and 325–348; these read DHYL…SYRT, FPAL…LISG, IRNV…CYTM, FDKL…ENGW, and QALP…LLHK.

This chain is F-box/LRR-repeat protein At5g35995, found in Arabidopsis thaliana (Mouse-ear cress).